The chain runs to 231 residues: 5'-methylthioadenosine/S-adenosylhomocysteine nucleosidase (231 aa).

Glutamate 12 (proton acceptor) is an active-site residue. Residues glycine 78, valine 153, and 174 to 175 each bind substrate; that span reads ME. Aspartate 198 serves as the catalytic Proton donor.

It belongs to the PNP/UDP phosphorylase family. MtnN subfamily.

The catalysed reaction is S-adenosyl-L-homocysteine + H2O = S-(5-deoxy-D-ribos-5-yl)-L-homocysteine + adenine. It catalyses the reaction S-methyl-5'-thioadenosine + H2O = 5-(methylsulfanyl)-D-ribose + adenine. It carries out the reaction 5'-deoxyadenosine + H2O = 5-deoxy-D-ribose + adenine. The protein operates within amino-acid biosynthesis; L-methionine biosynthesis via salvage pathway; S-methyl-5-thio-alpha-D-ribose 1-phosphate from S-methyl-5'-thioadenosine (hydrolase route): step 1/2. In terms of biological role, catalyzes the irreversible cleavage of the glycosidic bond in both 5'-methylthioadenosine (MTA) and S-adenosylhomocysteine (SAH/AdoHcy) to adenine and the corresponding thioribose, 5'-methylthioribose and S-ribosylhomocysteine, respectively. Also cleaves 5'-deoxyadenosine, a toxic by-product of radical S-adenosylmethionine (SAM) enzymes, into 5-deoxyribose and adenine. The polypeptide is 5'-methylthioadenosine/S-adenosylhomocysteine nucleosidase (Vibrio cholerae serotype O1 (strain ATCC 39315 / El Tor Inaba N16961)).